Reading from the N-terminus, the 601-residue chain is Glutathione-regulated potassium-efflux system protein KefB (601 aa).

A run of 13 helical transmembrane segments spans residues 4-24, 29-49, 55-75, 87-107, 115-135, 152-172, 177-197, 207-227, 230-250, 268-288, 291-311, 326-346, and 356-376; these read SDLLLAGVLFLFAAVIAVPLA, IGAVLGYLLAGIAIGPWGLGF, EILHFSELGVVFLMFIIGLEL, IFGVGAAQVMLSAAILGGLLM, AAVVGGIGLAMSSTAMALQLM, VLLFQDLAVIPALALVPLLAG, HVNWLTVGMKVLAFAGMLIGG, FIASSGVREVFTAATLLLVLG, LFMEALGLSMALGTFIAGVLL, GLLLGLFFISVGMALNLGVLY, LLWVAVSVAVLVAVKMLVLYL, FAGVLSQGGEFAFVLFSLPAS, and ALLLVAVTLSMMTTPLLMKGI. In terms of domain architecture, RCK N-terminal spans 400 to 519; it reads KPQVIIVGFG…AGVTQFSRET (120 aa).

The protein belongs to the monovalent cation:proton antiporter 2 (CPA2) transporter (TC 2.A.37) family. KefB subfamily. Interacts with the regulatory subunit KefG.

It is found in the cell inner membrane. Pore-forming subunit of a potassium efflux system that confers protection against electrophiles. Catalyzes K(+)/H(+) antiport. This Klebsiella pneumoniae subsp. pneumoniae (strain ATCC 700721 / MGH 78578) protein is Glutathione-regulated potassium-efflux system protein KefB.